The sequence spans 559 residues: Cytoplasmic polyadenylation element-binding protein 1 (559 aa).

The segment at 222 to 243 (SRMDHSSSPLTPPPSASPSGSL) is disordered. RRM domains lie at 304 to 401 (CKVF…DAQV) and 423 to 504 (NTVF…PYLE). Positions 508, 511, 520, 525, 530, 533, 538, and 546 each coordinate Zn(2+).

It belongs to the RRM CPEB family. As to expression, expressed in oocytes (at protein level). During oocyte maturation becomes detectable at stage Ib, and remains ubiquitously distributed within the oocyte cytoplasm until stage II. It then follows a gradual accumulation to the future animal pole during stage III, and remains localized to this pole at stage IV (at protein level). Expressed in oocytes, blastomeres and pre-mid-blastula transition embryos. Its expression during oogenesis is ubiquitous at stages I and II, but gradually accumulated at the periphery of the oocyte in the presumptive animal pole during stage III. Expression was maintained in that region at stage IV, and then became delocalized at stage V to cover a much broader area presumably encompassing the future blastodisc.

The protein resides in the cytoplasm. Sequence-specific RNA-binding protein that regulates mRNA cytoplasmic polyadenylation and translation initiation during oocyte maturation and early development. Binds to the cytoplasmic polyadenylation element (CPE), an uridine-rich sequence element (consensus sequence 5'-UUUUUAU-3') within the mRNA 3'-UTR. The protein is Cytoplasmic polyadenylation element-binding protein 1 (cpeb1) of Danio rerio (Zebrafish).